Reading from the N-terminus, the 69-residue chain is U-Asilidin(12)-Dg3a (69 aa).

Positions 1–19 are cleaved as a signal peptide; sequence MRFLNIFLFFAAIIAFATA. Positions 20 to 33 are excised as a propeptide; sequence SQVFEEDEIDMEPR. 3 cysteine pairs are disulfide-bonded: Cys36/Cys59, Cys45/Cys65, and Cys49/Cys67.

Belongs to the asilidin-12 family. As to expression, expressed by the venom gland.

The protein localises to the secreted. Its function is as follows. Moderately increases Kv11.1/KCNH2/ERG1 currents and shifts the voltage-dependence of the channel activation to hyperpolarised potentials. In vivo, induces neurotoxic effects when injected into insects (tested on L.cuprina and A.domesticus). This chain is U-Asilidin(12)-Dg3a, found in Dolopus genitalis (Giant Australian assassin fly).